The sequence spans 274 residues: MAHYFVGDIQGCFAELQKLLAKVDFNPSRDELWAVGDLVARGPDSLATLRFFRSLGDSAKTVLGNHDLHLMALHGKLKRAKPSDNLTEILESPDISASIDWLRQQPLMRELPEHQLIMSHAGVPPQWSLEVLREEAALVSCALNQDDYLEALISQMYSDSAEKWDPSAIGIERLRYCINALTRMRYLYVDGRLDFDCKQPPENCTNPQLKPWFEFASPLRQCHTLVFGHWAALMGNVGDTKLKALDTGCCWGEHLTLWHLEKDQKITQKKLKKS.

The protein belongs to the Ap4A hydrolase family.

It carries out the reaction P(1),P(4)-bis(5'-adenosyl) tetraphosphate + H2O = 2 ADP + 2 H(+). In terms of biological role, hydrolyzes diadenosine 5',5'''-P1,P4-tetraphosphate to yield ADP. The polypeptide is Bis(5'-nucleosyl)-tetraphosphatase, symmetrical (Shewanella baltica (strain OS155 / ATCC BAA-1091)).